A 449-amino-acid chain; its full sequence is Galactosyl transferase CpsE (449 aa).

The next 5 helical transmembrane spans lie at 5-22, 27-46, 59-78, 88-107, and 258-280; these read VVVYFSASLTLTLITPNF, DLLFVLLIHYIVFYLSDFYR, MVLKYSFYYIFISSSLFFIF, SFFTFIAMNSILLYLLNSFL, and FLDITGAIIGLLICGIVAIFLVP.

This sequence belongs to the bacterial sugar transferase family.

It localises to the cell membrane. In terms of biological role, galactosyl transferase is essential for the assembly of the group B streptococci (GBS) type III capsular polysaccharide. May be involved in the formation of either or both galactosidic bonds by catalyzing the addition of galactose to an oligosaccharide precursor or to a lipid intermediate. Type III capsular polysaccharide consists of a linear backbone with short side chains ending in residues of N-acetylneuraminic acid or sialic acid. The presence of sialic acid on the surface of the organism inhibits activation of the alternative pathway of complement and is thought to be an important element in the virulence function of the capsule. This Streptococcus agalactiae serotype III (strain NEM316) protein is Galactosyl transferase CpsE (cpsE).